Consider the following 569-residue polypeptide: MGDNTSPISVILVSSGSRGNKLLFRYPFQRSQEHPASQTNKPRSRYAVNNTGEHADDQDGDSRFSDVILATILATKSEMCGQKFELKIDNVRFVGHPTLLQHALGQVSKTDPSPKREAPTMILFNVVFALRANADPSVINCLHNLSRRIATVLQHEERRCQYLTREAKLILALQDEVSAMADANEGPQSPFQHILPKCKLARDLKEAYDSLCTSGVVRLHINSWLEVSFCLPHKIHYAASSLIPPEAIERSLKAIRPYHALLLLSDEKSLLSELPIDCSPALVRVIKTTSAVKNLQQLAQDADLALLQVFQLAAHLVYWGKAVIIYPLCENNVYVMSPNASVCLYSPLAEQFSRQFPSHDLPSVLAKFSLPVSLSEFRSPLAPPAQETQLIQMVVWMLQRRLLIQLHTYVCLMASPSEEEPRLREDDVPFTARVGGRSLSTPNALSFGSPTSSDDMTLTSPSMDNSSAELLPSGDSPLNKRMTENLLASLSEHERAAILNVPAAQNPEDLRMFARLLHYFRGRHHLEEIMYNENTRRSQLLMLFDKFRSVLVVTTHEDPVIAVFQALLT.

2 disordered regions span residues 27 to 60 and 441 to 476; these read PFQR…DQDG and TPNA…SGDS. 2 stretches are compositionally biased toward polar residues: residues 34 to 52 and 441 to 468; these read HPAS…NNTG and TPNA…NSSA. S476 bears the Phosphoserine mark.

This sequence belongs to the NPR3 family. In terms of assembly, within the GATOR complex, component of the GATOR1 subcomplex, made of DEPDC5, NPRL2 and NPRL3. GATOR1 mediates the strong interaction of the GATOR complex with small GTPases Rag (RagA/RRAGA, RagB/RRAGB, RagC/RRAGC and/or RagD/RRAGD) heterodimers. GATOR1 interacts with GPR155/LYCHOS; interaction takes place in presence of cholesterol and prevents interaction between GATOR1 and KICSTOR.

The protein localises to the lysosome membrane. Its function is as follows. As a component of the GATOR1 complex functions as an inhibitor of the amino acid-sensing branch of the mTORC1 pathway. In response to amino acid depletion, the GATOR1 complex has GTPase activating protein (GAP) activity and strongly increases GTP hydrolysis by RagA/RRAGA (or RagB/RRAGB) within heterodimeric Rag complexes, thereby turning them into their inactive GDP-bound form, releasing mTORC1 from lysosomal surface and inhibiting mTORC1 signaling. In the presence of abundant amino acids, the GATOR1 complex is negatively regulated by GATOR2, the other GATOR subcomplex, in this amino acid-sensing branch of the TORC1 pathway. This chain is GATOR1 complex protein NPRL3, found in Mus musculus (Mouse).